A 987-amino-acid chain; its full sequence is MRRPNLDRLRLKSRQGFETSVSKPSTPSYSTYSLSPTFSDKSVLSPSTMSDSYALSSTYTAGSSYQNGESDYFGSLPTPSSDKSSTSPFPYLKGSFDDRFSSTHSLTRQPSPRSPLTPLKGNTRASPEIRYVSDFTPPSSPFEDMQASVHSLPLSGCSIGPVRTNHSSSLSNSSNSLLQTESSLRPNSSFVNSPFFPLPSSDDLFLNDRVINLFLFYEKFSYLFTHLLSAIKSRDALSIPSLVLSLQEELFNLCQQTGTFYLLQHNLLQNFEFENPIKLHFDKIIPYFSRLTVLTFSNRAFIFPDHTFPRLQQSAEDFLYHLQFFFTLCANNSLYLSRFCYYPSFVPNTPFGGKWTNNGLSAVSSAYRTRLLEPCLPELDKCVWFLLKNCDEFIENFSDFADEEYVFEICSTITSHSEQIFNKLESWDMSIYFDKDLSECEQATNFAVQSYFVTKQRCYDLLTDLVCSSQDLMMEHSNDFSTMPTMIASIAVAFQTLFENVCDFLKVRAALVDEMQELATKEFENKFSNANTAKDDEPARQTNKGTTRISRSSDFTAVSEMSKDTLTLGRNSLQSILMLDNLLTNKVVQSDNNVKGGTLPALVHYLVQNVHLNKDFRHSFLLTYKTFTTPQELFTLLVILFHELPPPGLDATAYSSWEKGDNFVTKKNVCTVMNLWVQKYFFEDLKARNTLYLISEMRTFLRDHVVPSFHIGSVILSEIDNLWTEEPPDSLTQRLLSSPMATFISLNVYAYTPEEFASQMTLLEFDYLKQIPSREWIFRSWVSRDSRSAVRNYINFSNCFTYWIINCILEKKNTKARTAVISFFIQTAYKCLSLQNFSTLMSIVSALNSAPIYRLHAAYKLVKAEDIICLSGLREIVETKKNFSTYRALLRKAELPCVPFLGVILSDLTFIDEGNPDVLDSSPHLLSFNKRHRLADVVADVCRFQSSSYEMQSNTDLQSYILHRCRFVNQDLSYLFDKSLSLEPRSS.

Over residues 1–10 (MRRPNLDRLR) the composition is skewed to basic and acidic residues. Disordered stretches follow at residues 1-50 (MRRP…STMS), 100-130 (FSST…PEIR), and 529-552 (NANT…ISRS). Positions 19–39 (TSVSKPSTPSYSTYSLSPTFS) are enriched in low complexity. Composition is skewed to polar residues over residues 40–50 (DKSVLSPSTMS), 102–111 (STHSLTRQPS), and 540–552 (RQTN…ISRS). Phosphoserine is present on Ser-552. The N-terminal Ras-GEF domain maps to 590-723 (SDNNVKGGTL…VILSEIDNLW (134 aa)). One can recognise a Ras-GEF domain in the interval 752-985 (TPEEFASQMT…FDKSLSLEPR (234 aa)).

It localises to the cytoplasm. Functionally, has a role in chromosome segregation and cell morphology upstream of the ras1-scd1 pathway. Promotes the exchange of ras1-bound GDP by GTP leading to its activation. The sequence is that of Ras guanine nucleotide exchange factor efc25 (efc25) from Schizosaccharomyces pombe (strain 972 / ATCC 24843) (Fission yeast).